Reading from the N-terminus, the 877-residue chain is DNA polymerase I (877 aa).

Residues 177-270 (TPAQFIDLKA…LEDLVYSGPD (94 aa)) enclose the 5'-3' exonuclease domain. Residues 302-465 (DFTIVDQISQ…TEPILLEKLS (164 aa)) enclose the 3'-5' exonuclease domain.

Belongs to the DNA polymerase type-A family. As to quaternary structure, single-chain monomer with multiple functions.

The enzyme catalyses DNA(n) + a 2'-deoxyribonucleoside 5'-triphosphate = DNA(n+1) + diphosphate. In addition to polymerase activity, this DNA polymerase exhibits 3'-5' and 5'-3' exonuclease activity. The protein is DNA polymerase I (polA) of Streptococcus pneumoniae (strain ATCC BAA-255 / R6).